The sequence spans 648 residues: RAF proto-oncogene serine/threonine-protein kinase (648 aa).

S29 bears the Phosphoserine; by MAPK1 mark. A Phosphoserine modification is found at S43. In terms of domain architecture, RBD spans 56–131 (NTIRVFLPNK…IGEELQVDFL (76 aa)). A Phorbol-ester/DAG-type zinc finger spans residues 138–184 (THNFARKTFLKLAFCDICQKFLLNGFRCQTCGYKFHEHCSTKVPTMC). 8 residues coordinate Zn(2+): H139, C152, C155, C165, C168, H173, C176, and C184. Residues 217-335 (MRESVSRMPA…EKNKIRPRGQ (119 aa)) form a disordered region. S233 carries the post-translational modification Phosphoserine; by PKA. A compositionally biased stretch (polar residues) spans 239–271 (TFNTSSPSSEGSLSQRQRSTSTPNVHMVSTTLP). 2 positions are modified to phosphoserine: S252 and S259. T268 bears the Phosphothreonine; by autocatalysis mark. T269 bears the Phosphothreonine; by PKA mark. Over residues 275–285 (RMIEDAIRSHS) the composition is skewed to basic and acidic residues. Over residues 286–301 (ESASPSALSSSPNNLS) the composition is skewed to low complexity. A phosphoserine; by MAPK1 mark is found at S289, S296, and S301. Residues 331 to 349 (RPRGQRDSSYYWEIEASEV) are interaction with PEBP1/RKIP. At S338 the chain carries Phosphoserine; by PAK1, PAK2, PAK3 and PAK5. S339 carries the post-translational modification Phosphoserine; by PAK1, PAK2 and PAK3. 2 positions are modified to phosphotyrosine; by SRC: Y340 and Y341. The 261-residue stretch at 349 to 609 (VMLSTRIGSG…PQILSSIELL (261 aa)) folds into the Protein kinase domain. Residues 355 to 363 (IGSGSFGTV) and K375 each bind ATP. Residue D468 is the Proton acceptor of the active site. S471 bears the Phosphoserine mark. T491 is modified (phosphothreonine). S494 is subject to Phosphoserine. A phosphoserine; by PKC mark is found at S497 and S499. The residue at position 563 (R563) is a Symmetric dimethylarginine; by PRMT5. S621 is modified (phosphoserine). A Phosphoserine; by MAPK1 modification is found at S642.

Belongs to the protein kinase superfamily. TKL Ser/Thr protein kinase family. RAF subfamily. Monomer. Homodimer. Heterodimerizes with BRAF and this heterodimer possesses a highly increased kinase activity compared to the respective homodimers or monomers. Heterodimerization is mitogen-regulated and enhanced by 14-3-3 proteins. MAPK1/ERK2 activation can induce a negative feedback that promotes the dissociation of the heterodimer. Forms a multiprotein complex with Ras (M-Ras/MRAS), SHOC2 and protein phosphatase 1 (PPP1CA, PPP1CB and PPP1CC). Interacts with LZTR1. Interacts with Ras proteins; the interaction is antagonized by RIN1. Weakly interacts with RIT1. Interacts with STK3/MST2; the interaction inhibits its pro-apoptotic activity. Interacts (when phosphorylated at Ser-259) with YWHAZ (unphosphorylated at 'Thr-232'). Interacts with MAP3K5/ASF1 (via N-terminus) and this interaction inhibits the proapoptotic function of MAP3K5/ASK1. Interacts with PAK1 (via kinase domain). The phosphorylated form interacts with PIN1. The Ser-338 and Ser-339 phosphorylated form (by PAK1) interacts with BCL2. Interacts with PEBP1/RKIP and this interaction is enhanced if RAF1 is phosphorylated on residues Ser-338, Ser-339, Tyr-340 and Tyr-341. Interacts with ADCY2, ADCY5, ADCY6, DGKH, RCAN1/DSCR1, PPP1R12A, PKB/AKT1, PPP2CA, PPP2R1B, SPRY2, SPRY4, CNKSR1/CNK1, KSR2 and PHB/prohibitin. Interacts with ROCK2. Interacts (via N-terminus) with RGS14 (via RBD domains); the interaction mediates the formation of a ternary complex with BRAF, a ternary complex inhibited by GNAI1. Probably forms a complex composed of chaperones HSP90 and HSP70, co-chaperones CDC37, PPP5C, TSC1 and client protein TSC2, CDK4, AKT, RAF1 and NR3C1; this complex does not contain co-chaperones STIP1/HOP and PTGES3/p23. Interacts with MAP2K1/MEK1 and MAP2K2/MEK2. In its active form, interacts with PRMT5. Interacts with FAM83B; displaces 14-3-3 proteins from RAF1 and activates RAF1. Interacts with PDE8A; the interaction promotes RAF1 activity. Interacts with MFHAS1. Interacts with GLS. Interacts with YWHAZ. Interacts with NEK10 and MAP2K1; the interaction is direct with NEK10 and required for ERK1/2-signaling pathway activation in response to UV irradiation. It depends on Zn(2+) as a cofactor. Phosphorylation at Thr-269, Ser-338, Tyr-341, Thr-491 and Ser-494 results in its activation. Phosphorylation at Ser-29, Ser-43, Ser-289, Ser-296, Ser-301 and Ser-642 by MAPK1/ERK2 results in its inactivation. Phosphorylation at Ser-259 induces the interaction with YWHAZ and inactivates kinase activity. Dephosphorylation of Ser-259 by the SHOC2-MRAS-PP1c (SMP) complex consisting of SHOC2, GTP-bound M-Ras/MRAS and the catalytic subunit of protein phosphatase 1 (PPP1CA, PPP1CB or PPP1CC); this relieves inactivation and stimulates kinase activity. Phosphorylation at Ser-338 by PAK1 and PAK5 and Ser-339 by PAK1 is required for its mitochondrial localization. Phosphorylation at Ser-621 in response to growth factor treatment stabilizes the protein, possibly by preventing proteasomal degradation. Phosphorylation at Ser-289, Ser-296, Ser-301, Ser-338 and Ser-621 are somehow linked to the methylation potential of cells. Treatment of cells with HGF in the presence of the methylation inhibitor 5'-methylthioadenosine (MTA) results in increased phosphorylation at Ser-338 and Ser-621 and decreased phosphorylation at Ser-296, Ser-301 and Ser-338. Dephosphorylation at Ser-338 by PPP5C results in a decreased of activity. In terms of processing, methylated in response to EGF treatment. This modification leads to destabilization of the protein, possibly through proteasomal degradation.

The protein resides in the cytoplasm. It is found in the cell membrane. It localises to the mitochondrion. The protein localises to the nucleus. It carries out the reaction L-seryl-[protein] + ATP = O-phospho-L-seryl-[protein] + ADP + H(+). It catalyses the reaction L-threonyl-[protein] + ATP = O-phospho-L-threonyl-[protein] + ADP + H(+). With respect to regulation, regulation is a highly complex process involving membrane recruitment, protein-protein interactions, dimerization, and phosphorylation/dephosphorylation events. Ras-GTP recruits RAF1 to the membrane, thereby promoting its activation. The inactive conformation of RAF1 is maintained by autoinhibitory interactions occurring between the N-terminal regulatory and the C-terminal catalytic domains and by the binding of a 14-3-3 protein that contacts two phosphorylation sites, Ser-259 and Ser-621. Upon mitogenic stimulation, Ras and PPP2R1A cooperate to release autoinhibition and the subsequent phosphorylation of activating sites: Ser-338, Tyr-341, Thr-491, and Ser-494, yields a fully active kinase. Through a negative feedback mechanism involving MAPK1/ERK2, RAF1 is phosphorylated on Ser-29, Ser-43, Ser-289, Ser-296, Ser-301 and Ser-642 by MAPK1/ERK2, which yields an inactive, desensitized kinase. The signaling-competent conformation of RAF1 is finally re-established by the coordinated action of PIN1, a prolyl isomerase that converts pSer and pThr residues from the cis to the trans conformation, which is preferentially recognized and dephosphorylated by PPP2R1A. Activated by homodimerization and heterodimerization (with BRAF). Also regulated through association with other proteins such as KSR2, CNKSR1/CNK1, PEBP1/RKIP, PHB/prohibitin and SPRY4. PEBP1/RKIP acts by dissociating RAF1 from its substrates MAP2K1/MEK1 and MAP2K2/MEK2. PHB/prohibitin facilitates the displacement of 14-3-3 from RAF1 by activated Ras, thereby promoting cell membrane localization and phosphorylation of RAF1 at the activating Ser-338. SPRY4 inhibits Ras-independent, but not Ras-dependent, activation of RAF1. CNKSR1/CNK1 regulates Src-mediated RAF1 activation. Functionally, serine/threonine-protein kinase that acts as a regulatory link between the membrane-associated Ras GTPases and the MAPK/ERK cascade, and this critical regulatory link functions as a switch determining cell fate decisions including proliferation, differentiation, apoptosis, survival and oncogenic transformation. RAF1 activation initiates a mitogen-activated protein kinase (MAPK) cascade that comprises a sequential phosphorylation of the dual-specific MAPK kinases (MAP2K1/MEK1 and MAP2K2/MEK2) and the extracellular signal-regulated kinases (MAPK3/ERK1 and MAPK1/ERK2). The phosphorylated form of RAF1 (on residues Ser-338 and Ser-339, by PAK1) phosphorylates BAD/Bcl2-antagonist of cell death at 'Ser-75'. Phosphorylates adenylyl cyclases: ADCY2, ADCY5 and ADCY6, resulting in their activation. Phosphorylates PPP1R12A resulting in inhibition of the phosphatase activity. Can promote NF-kB activation and inhibit signal transducers involved in motility (ROCK2), apoptosis (MAP3K5/ASK1 and STK3/MST2), proliferation and angiogenesis (RB1). Can protect cells from apoptosis also by translocating to the mitochondria where it binds BCL2 and displaces BAD/Bcl2-antagonist of cell death. Regulates Rho signaling and migration, and is required for normal wound healing. Plays a role in the oncogenic transformation of epithelial cells via repression of the TJ protein, occludin (OCLN) by inducing the up-regulation of a transcriptional repressor SNAI2/SLUG, which induces down-regulation of OCLN. Restricts caspase activation in response to selected stimuli, notably Fas stimulation, pathogen-mediated macrophage apoptosis, and erythroid differentiation. Phosphorylates TNNT2/cardiac muscle troponin T. The chain is RAF proto-oncogene serine/threonine-protein kinase (Raf1) from Rattus norvegicus (Rat).